The primary structure comprises 353 residues: MARTPERRVRTLDFAQFCHGEPSSSHGFCRELVDCLRSLGFVKIRNHGISGEEIEKVFVMNKLFFSLPQAAKAKAAHPPEANPHRGYSYVGQEKLSRVKDYEKGKRSIVDVYDIKESYDQGPAVDKLYPNRWPDKQDIPGFRVVMEKFYERCHQVHQDVLRAIATGFDLSPSFLTDLCCENTSELRLNHYPGVHPSSLRKGAKRISEHTDFGTVTLLFQDSVGGLEIEDQNSPGTYFPVSSERKSDMIVNVGDCIQRWTNDKILSTSHRVVLPEDRDALIKDRYSVAYFGKPSRSQLVSPLREFVKEGEKPKYSAISAWQYNQEKLVLTYGGDEEILVPKPSSSVCTGVGQLQ.

A Fe2OG dioxygenase domain is found at 181-292 (NTSELRLNHY…RYSVAYFGKP (112 aa)). H208, D210, and H268 together coordinate Fe cation. R283 is a binding site for 2-oxoglutarate.

It belongs to the iron/ascorbate-dependent oxidoreductase family. Requires Fe(2+) as cofactor.

It catalyses the reaction L-proline + 2-oxoglutarate + O2 = trans-4-hydroxy-L-proline + succinate + CO2. The catalysed reaction is L-proline + 2-oxoglutarate + O2 = trans-3-hydroxy-L-proline + succinate + CO2. It carries out the reaction D-proline + 2-oxoglutarate + O2 = cis-4-hydroxy-D-proline + succinate + CO2. It participates in secondary metabolite biosynthesis. Its function is as follows. 2-oxoglutarate-Fe(II) type oxidoreductase; part of the gene cluster that mediates the biosynthesis of pyrrolopyrazines, secondary metabolites showing insecticidal activity. Within the pathway, ppzD converts L-proline into trans-4-hydroxy-L-proline as a major product, yielding a key precursor for peramine biosynthesis. PpzD is also able to convert L-proline into trans-3-hydroxy-L-proline. The single multifunctional NRPS ppzA is sufficient to produce peramine via condensation of 1-pyrroline-5-carboxylate and arginine, N-methylation of the alpha-amino group of arginine and reduction of the thioester and the cyclization to form an iminium ion resulting in release from the peptide synthetase. Deprotonation of this intermediate and oxidation of the pyrroline ring would give rise to peramine. In Epichloe species that produce only peramine, the peramine synthetase gene is not localized in a gene cluster, in contrast to Metarhizium species that contain additional pyrrolopyrazine biosynthesis genes. The 2-oxoglutarate-Fe(II) type oxidoreductase ppzC hydroxylates peramine to yield the newly identified compound 8-hydroxyperamine whereas ppzD converts L-proline into trans-4-hydroxy-L-proline, a precursor of peramine biosynthesis. The polypeptide is 2-oxoglutarate-Fe(II) type oxidoreductase ppzD (Metarhizium rileyi (strain RCEF 4871) (Nomuraea rileyi)).